The following is a 377-amino-acid chain: Carbamoyl phosphate synthase small chain (377 aa).

Positions 1 to 186 (MNTPALLVLA…LGKGFVTPDK (186 aa)) are CPSase. L-glutamine-binding residues include Ser-47, Gly-238, and Gly-240. The region spanning 190–377 (HVVAYDFGVK…IGNMKAAKQA (188 aa)) is the Glutamine amidotransferase type-1 domain. The Nucleophile role is filled by Cys-266. L-glutamine is bound by residues Leu-267, Gln-270, Asn-308, Gly-310, and Phe-311. Residues His-350 and Glu-352 contribute to the active site.

The protein belongs to the CarA family. Composed of two chains; the small (or glutamine) chain promotes the hydrolysis of glutamine to ammonia, which is used by the large (or ammonia) chain to synthesize carbamoyl phosphate. Tetramer of heterodimers (alpha,beta)4.

The enzyme catalyses hydrogencarbonate + L-glutamine + 2 ATP + H2O = carbamoyl phosphate + L-glutamate + 2 ADP + phosphate + 2 H(+). It carries out the reaction L-glutamine + H2O = L-glutamate + NH4(+). It participates in amino-acid biosynthesis; L-arginine biosynthesis; carbamoyl phosphate from bicarbonate: step 1/1. It functions in the pathway pyrimidine metabolism; UMP biosynthesis via de novo pathway; (S)-dihydroorotate from bicarbonate: step 1/3. Functionally, small subunit of the glutamine-dependent carbamoyl phosphate synthetase (CPSase). CPSase catalyzes the formation of carbamoyl phosphate from the ammonia moiety of glutamine, carbonate, and phosphate donated by ATP, constituting the first step of 2 biosynthetic pathways, one leading to arginine and/or urea and the other to pyrimidine nucleotides. The small subunit (glutamine amidotransferase) binds and cleaves glutamine to supply the large subunit with the substrate ammonia. The chain is Carbamoyl phosphate synthase small chain from Neisseria gonorrhoeae.